The primary structure comprises 116 residues: MTHLLTVFLVALMGLPVAQALECHVCAYNGDNCFKPMRCPAMATYCMTTRTYFTPYRMKVRKSCVPSCFETVYDGYSKHASATSCCQYYLCNGAGFATPVTLALVPALLATFWSLL.

A signal peptide spans M1–A20. Positions L21 to L104 constitute a UPAR/Ly6 domain. 5 cysteine pairs are disulfide-bonded: C23–C46, C26–C33, C39–C64, C68–C85, and C86–C91. The GPI-anchor amidated asparagine moiety is linked to residue N92. The propeptide at G93 to L116 is removed in mature form.

In terms of assembly, interacts with nAChRs containing alpha-4:beta-2 (CHRNA4:CHRNB2) and alpha-7 (CHRNA7) subunits. Interacts with CHRNA4 probably in the endoplasmic reticulum prior to nAChR pentameric assembly. Interacts with KCNA2/Potassium voltage-gated channel subfamily A member 2. In terms of tissue distribution, expressed in neurons of multiple regions in the CNS, including the cerebral cortex, thalamus, substantia nigra, cerebellum, amygdala and hippocampus. Also expressed in kidney, heart and thymus, but at lower levels than in the brain. Expressed in the primary visual cortex (V1) and the lateral geniculate nucleus (at protein level).

The protein localises to the cell membrane. It localises to the cell projection. Its subcellular location is the dendrite. The protein resides in the endoplasmic reticulum. Functionally, acts in different tissues through interaction to nicotinic acetylcholine receptors (nAChRs). The proposed role as modulator of nAChR activity seems to be dependent on the nAChR subtype and stoichiometry, and to involve an effect on nAChR trafficking and its cell surface expression, and on single channel properties of the nAChR inserted in the plasma membrane. Modulates functional properties of nicotinic acetylcholine receptors (nAChRs) to prevent excessive excitation, and hence neurodegeneration. Enhances desensitization by increasing both the rate and extent of desensitization of alpha-4:beta-2-containing nAChRs and slowing recovery from desensitization. Promotes large amplitude ACh-evoked currents through alpha-4:beta-2 nAChRs. Is involved in regulation of the nAChR pentameric assembly in the endoplasmic reticulum. Shifts stoichiometry from high sensitivity alpha-4(2):beta-2(3) to low sensitivity alpha-4(3):beta-2(2) nAChR. In vitro modulates alpha-3:beta-4-containing nAChRs. Reduces cell surface expression of (alpha-3:beta-4)(2):beta-4 and (alpha-3:beta-4)(2):alpha-5 nAChRs suggesting an interaction with nAChR alpha-3(-):(+)beta-4 subunit interfaces and an allosteric mode. Corresponding single channel effects characterized by decreased unitary conductance, altered burst proportions and enhanced desensitization/inactivation seem to depend on nAChR alpha:alpha subunit interfaces and are greater in (alpha-3:beta-2)(2):alpha-3 when compared to (alpha-3:beta-2)(2):alpha-5 nAChRs. Prevents plasticity in the primary visual cortex late in life. The sequence is that of Ly-6/neurotoxin-like protein 1 from Mus musculus (Mouse).